A 623-amino-acid chain; its full sequence is tRNA uridine 5-carboxymethylaminomethyl modification enzyme MnmG (623 aa).

12–17 (GAGHAG) is a binding site for FAD. 272 to 286 (GPRYCPSIEDKINRF) serves as a coordination point for NAD(+).

Belongs to the MnmG family. As to quaternary structure, homodimer. Heterotetramer of two MnmE and two MnmG subunits. FAD is required as a cofactor.

Its subcellular location is the cytoplasm. NAD-binding protein involved in the addition of a carboxymethylaminomethyl (cmnm) group at the wobble position (U34) of certain tRNAs, forming tRNA-cmnm(5)s(2)U34. The chain is tRNA uridine 5-carboxymethylaminomethyl modification enzyme MnmG from Christiangramia forsetii (strain DSM 17595 / CGMCC 1.15422 / KT0803) (Gramella forsetii).